The chain runs to 248 residues: ATP synthase subunit a, chloroplastic (248 aa).

The next 5 membrane-spanning stretches (helical) occupy residues 35 to 55 (GQVFIVSWLVIATLLTLSFLG), 94 to 114 (VPYIATLFLFILGCNWAGALI), 133 to 153 (INTTVALSLLTSLAYFYAGLS), 202 to 222 (VFTLLIPILIPLPVMILGLFA), and 224 to 244 (SIQALIFSTLSAAYIGEAMEG).

The protein belongs to the ATPase A chain family. F-type ATPases have 2 components, CF(1) - the catalytic core - and CF(0) - the membrane proton channel. CF(1) has five subunits: alpha(3), beta(3), gamma(1), delta(1), epsilon(1). CF(0) has four main subunits: a, b, b' and c.

It is found in the plastid. The protein localises to the chloroplast thylakoid membrane. In terms of biological role, key component of the proton channel; it plays a direct role in the translocation of protons across the membrane. The protein is ATP synthase subunit a, chloroplastic of Pyropia yezoensis (Susabi-nori).